The following is a 209-amino-acid chain: Na(+)-translocating NADH-quinone reductase subunit D (209 aa).

Transmembrane regions (helical) follow at residues 42-62, 66-86, 95-115, 131-151, and 178-198; these read VVMT…ISLI, IPNS…VIVV, FEIS…CIVM, FMDG…VGFL, and NGLF…IWAL.

Belongs to the NqrDE/RnfAE family. In terms of assembly, composed of six subunits; NqrA, NqrB, NqrC, NqrD, NqrE and NqrF.

It is found in the cell inner membrane. The catalysed reaction is a ubiquinone + n Na(+)(in) + NADH + H(+) = a ubiquinol + n Na(+)(out) + NAD(+). Its function is as follows. NQR complex catalyzes the reduction of ubiquinone-1 to ubiquinol by two successive reactions, coupled with the transport of Na(+) ions from the cytoplasm to the periplasm. NqrA to NqrE are probably involved in the second step, the conversion of ubisemiquinone to ubiquinol. The chain is Na(+)-translocating NADH-quinone reductase subunit D from Serratia proteamaculans (strain 568).